We begin with the raw amino-acid sequence, 842 residues long: Outer membrane usher protein LpfC (842 aa).

A signal peptide spans 1-21 (MTWTHLPLGNKTSRFTQSALA). Cys-819 and Cys-841 are oxidised to a cystine.

Belongs to the fimbrial export usher family.

It is found in the cell outer membrane. Functionally, involved in the export and assembly of LpfA fimbrial subunits across the outer membrane. The protein is Outer membrane usher protein LpfC (lpfC) of Salmonella typhimurium (strain LT2 / SGSC1412 / ATCC 700720).